The primary structure comprises 465 residues: Gamma-aminobutyric acid receptor subunit alpha-6 (465 aa).

Positions 1–19 are cleaved as a signal peptide; it reads MALLIAWVCVAVSIEKALG. Topologically, residues 20 to 243 are extracellular; sequence GQGDGGDLYS…FHLQRKMGYF (224 aa). Residue asparagine 31 is glycosylated (N-linked (GlcNAc...) asparagine). Residue arginine 84 coordinates 4-aminobutanoate. Residues asparagine 128 and asparagine 141 are each glycosylated (N-linked (GlcNAc...) asparagine). Threonine 147 contributes to the 4-aminobutanoate binding site. Cysteine 156 and cysteine 170 form a disulfide bridge. A helical membrane pass occupies residues 244-264; the sequence is MIQIYTPCIMTVILSQVSFWI. Over 265-270 the chain is Cytoplasmic; sequence NKESVP. The helical transmembrane segment at 271–290 threads the bilayer; the sequence is ARTVFGITTVLTMTTLSISA. The Extracellular segment spans residues 291 to 304; the sequence is RHSLPKVSYATAMD. The chain crosses the membrane as a helical span at residues 305–325; sequence WFIAVCFAFVFSALIEFAAVN. The Cytoplasmic segment spans residues 326-424; it reads YFTNLQTQRA…GTSKIDQYSR (99 aa). The disordered stretch occupies residues 392–415; the sequence is NSASQCQPVSAPPPAPPAPPPVGG. Residues 401–413 are compositionally biased toward pro residues; that stretch reads SAPPPAPPAPPPV. Residues 425-445 traverse the membrane as a helical segment; sequence ILFPVAFAGFNLVYWVVYLSK. At 446–465 the chain is on the extracellular side; it reads DTMEFFEPTAMHLRNDHQSN.

The protein belongs to the ligand-gated ion channel (TC 1.A.9) family. Gamma-aminobutyric acid receptor (TC 1.A.9.5) subfamily. GABRA6 sub-subfamily. In terms of assembly, heteropentamer, formed by a combination of alpha (GABRA1-6), beta (GABRB1-3), gamma (GABRG1-3), delta (GABRD), epsilon (GABRE), rho (GABRR1-3), pi (GABRP) and theta (GABRQ) chains, each subunit exhibiting distinct physiological and pharmacological properties. Expressed in brain, in cerebellar granule cells.

Its subcellular location is the postsynaptic cell membrane. The protein localises to the cell membrane. The enzyme catalyses chloride(in) = chloride(out). Functionally, alpha subunit of the heteropentameric ligand-gated chloride channel gated by gamma-aminobutyric acid (GABA), a major inhibitory neurotransmitter in the brain. GABA-gated chloride channels, also named GABA(A) receptors (GABAAR), consist of five subunits arranged around a central pore and contain GABA active binding site(s) located at the alpha and beta subunit interface(s). When activated by GABA, GABAARs selectively allow the flow of chloride anions across the cell membrane down their electrochemical gradient. This chain is Gamma-aminobutyric acid receptor subunit alpha-6 (GABRA6), found in Gallus gallus (Chicken).